Here is a 488-residue protein sequence, read N- to C-terminus: UDP-GalNAc:beta-1,3-N-acetylgalactosaminyltransferase 2 (488 aa).

Topologically, residues 1–2 (MR) are cytoplasmic. The helical; Signal-anchor for type II membrane protein transmembrane segment at 3–23 (HLLLLFLCPCAIGVAFHLWLF) threads the bilayer. Residues N24, N105, and N162 are each glycosylated (N-linked (GlcNAc...) asparagine). The Lumenal portion of the chain corresponds to 24–488 (NFSGLFTWFP…CGNPCACEDR (465 aa)).

The protein belongs to the glycosyltransferase 31 family.

Its subcellular location is the golgi apparatus membrane. The protein localises to the endoplasmic reticulum. The enzyme catalyses 3-O-(N-acetyl-beta-D-glucosaminyl-(1-&gt;4)-alpha-D-mannosyl)-L-threonyl-[protein] + UDP-N-acetyl-alpha-D-galactosamine = 3-O-[beta-D-GalNAc-(1-&gt;3)-beta-D-GlcNAc-(1-&gt;4)-alpha-D-Man]-L-Thr-[protein] + UDP + H(+). The protein operates within protein modification; protein glycosylation. In terms of biological role, beta-1,3-N-acetylgalactosaminyltransferase that synthesizes a unique carbohydrate structure, GalNAc-beta-1-3GlcNAc, on N- and O-glycans. Has no galactose nor galactosaminyl transferase activity toward any acceptor substrate. Involved in alpha-dystroglycan (dag1) glycosylation. The sequence is that of UDP-GalNAc:beta-1,3-N-acetylgalactosaminyltransferase 2 (b3galnt2) from Xenopus tropicalis (Western clawed frog).